The chain runs to 221 residues: Thiamine-phosphate synthase (221 aa).

4-amino-2-methyl-5-(diphosphooxymethyl)pyrimidine-binding positions include 44–48 (QFREK) and Asn79. Residues Asp80 and Asp99 each contribute to the Mg(2+) site. 4-amino-2-methyl-5-(diphosphooxymethyl)pyrimidine is bound at residue Ser117. 143–145 (TRS) lines the 2-[(2R,5Z)-2-carboxy-4-methylthiazol-5(2H)-ylidene]ethyl phosphate pocket. A 4-amino-2-methyl-5-(diphosphooxymethyl)pyrimidine-binding site is contributed by Lys146. 2-[(2R,5Z)-2-carboxy-4-methylthiazol-5(2H)-ylidene]ethyl phosphate-binding positions include Gly175 and 195-196 (IS).

Belongs to the thiamine-phosphate synthase family. It depends on Mg(2+) as a cofactor.

The enzyme catalyses 2-[(2R,5Z)-2-carboxy-4-methylthiazol-5(2H)-ylidene]ethyl phosphate + 4-amino-2-methyl-5-(diphosphooxymethyl)pyrimidine + 2 H(+) = thiamine phosphate + CO2 + diphosphate. The catalysed reaction is 2-(2-carboxy-4-methylthiazol-5-yl)ethyl phosphate + 4-amino-2-methyl-5-(diphosphooxymethyl)pyrimidine + 2 H(+) = thiamine phosphate + CO2 + diphosphate. It carries out the reaction 4-methyl-5-(2-phosphooxyethyl)-thiazole + 4-amino-2-methyl-5-(diphosphooxymethyl)pyrimidine + H(+) = thiamine phosphate + diphosphate. It participates in cofactor biosynthesis; thiamine diphosphate biosynthesis; thiamine phosphate from 4-amino-2-methyl-5-diphosphomethylpyrimidine and 4-methyl-5-(2-phosphoethyl)-thiazole: step 1/1. In terms of biological role, condenses 4-methyl-5-(beta-hydroxyethyl)thiazole monophosphate (THZ-P) and 2-methyl-4-amino-5-hydroxymethyl pyrimidine pyrophosphate (HMP-PP) to form thiamine monophosphate (TMP). This is Thiamine-phosphate synthase from Geobacillus thermodenitrificans (strain NG80-2).